The primary structure comprises 104 residues: MKLAALLGLCVALSCSSAAAFLVGSAKPVAQPVAALESAAEAGAGTLANPLGTLNPLKLLLSSLGIPVNHLIEGSQKCVAELGPQAVGAVKALKALLGALTVFG.

Residues 1–20 (MKLAALLGLCVALSCSSAAA) form the signal peptide.

Belongs to the secretoglobin family. UGRP subfamily. In terms of assembly, homodimer; disulfide-linked. In terms of tissue distribution, highly expressed in lung and prostate. Also found in mammary gland, spleen, pancreas, testis and liver. Detected throughout the airway epithelium in lung, with highest expression in large airways. Found in lung submucosal glands where it localizes to acinar and ductile cells. Not detected in respiratory bronchioles, alveolar ducts or alveolar epithelium. In mammary gland, specifically localizes to luminal epithelial cells.

The protein localises to the secreted. Secreted cytokine-like protein. Inhibits cell growth in vitro. The sequence is that of Secretoglobin family 3A member 1 (SCGB3A1) from Homo sapiens (Human).